The following is a 1894-amino-acid chain: Plexin-A4 (1894 aa).

The signal sequence occupies residues methionine 1–serine 23. The 484-residue stretch at threonine 24–valine 507 folds into the Sema domain. Topologically, residues threonine 24–proline 1237 are extracellular. 10 cysteine pairs are disulfide-bonded: cysteine 95–cysteine 104, cysteine 130–cysteine 138, cysteine 284–cysteine 405, cysteine 300–cysteine 356, cysteine 374–cysteine 393, cysteine 510–cysteine 527, cysteine 516–cysteine 558, cysteine 519–cysteine 536, cysteine 530–cysteine 542, and cysteine 593–cysteine 612. A PSI 1 domain is found at serine 509–valine 559. N-linked (GlcNAc...) asparagine glycosylation is present at asparagine 655. PSI domains follow at residues asparagine 655–proline 702 and lysine 803–threonine 856. IPT/TIG domains are found at residues proline 858–methionine 952, leucine 954–valine 1037, proline 1040–tyrosine 1139, and proline 1142–proline 1230. Asparagine 1007, asparagine 1132, and asparagine 1180 each carry an N-linked (GlcNAc...) asparagine glycan. A helical membrane pass occupies residues alanine 1238–isoleucine 1258. At alanine 1259–serine 1894 the chain is on the cytoplasmic side. At lysine 1350 the chain carries N6-acetyllysine.

Belongs to the plexin family. As to quaternary structure, interacts with NRP1 and NRP2.

It is found in the cell membrane. In terms of biological role, coreceptor for SEMA3A. Necessary for signaling by class 3 semaphorins and subsequent remodeling of the cytoskeleton. Plays a role in axon guidance in the developing nervous system. Class 3 semaphorins bind to a complex composed of a neuropilin and a plexin. The plexin modulates the affinity of the complex for specific semaphorins, and its cytoplasmic domain is required for the activation of down-stream signaling events in the cytoplasm. The protein is Plexin-A4 (PLXNA4) of Homo sapiens (Human).